The chain runs to 229 residues: Demethylmenaquinone methyltransferase (229 aa).

Residues threonine 62, aspartate 80, 100-101, and serine 117 contribute to the S-adenosyl-L-methionine site; that span reads DG.

It belongs to the class I-like SAM-binding methyltransferase superfamily. MenG/UbiE family.

It catalyses the reaction a 2-demethylmenaquinol + S-adenosyl-L-methionine = a menaquinol + S-adenosyl-L-homocysteine + H(+). It functions in the pathway quinol/quinone metabolism; menaquinone biosynthesis; menaquinol from 1,4-dihydroxy-2-naphthoate: step 2/2. Methyltransferase required for the conversion of demethylmenaquinol (DMKH2) to menaquinol (MKH2). This Corynebacterium kroppenstedtii (strain DSM 44385 / JCM 11950 / CIP 105744 / CCUG 35717) protein is Demethylmenaquinone methyltransferase.